A 153-amino-acid chain; its full sequence is Coiled-coil domain-containing protein 182 (153 aa).

Residues 46–109 adopt a coiled-coil conformation; sequence ADLEILQQKV…RLREEEDRGI (64 aa).

The chain is Coiled-coil domain-containing protein 182 (CCDC182) from Homo sapiens (Human).